The chain runs to 288 residues: AA9 family lytic polysaccharide monooxygenase A (288 aa).

Residues 1-22 form the signal peptide; sequence MKSTSATKFSVLAAATFAAAHG. Residues H21 and H104 each coordinate Cu(2+). 2 disulfide bridges follow: C74–C191 and C115–C119. N151 is a glycosylation site (N-linked (GlcNAc...) asparagine). 2 residues coordinate O2: H177 and Q186. Residue Y188 coordinates Cu(2+). Positions 236–270 are disordered; the sequence is PEPYKSGSGSSDNAAEAVSSAAAEEPAAAATSAAA. Residues 249–270 are compositionally biased toward low complexity; it reads AAEAVSSAAAEEPAAAATSAAA.

Belongs to the polysaccharide monooxygenase AA9 family. It depends on Cu(2+) as a cofactor.

It localises to the secreted. It catalyses the reaction [(1-&gt;4)-beta-D-glucosyl]n+m + reduced acceptor + O2 = 4-dehydro-beta-D-glucosyl-[(1-&gt;4)-beta-D-glucosyl]n-1 + [(1-&gt;4)-beta-D-glucosyl]m + acceptor + H2O.. In terms of biological role, lytic polysaccharide monooxygenase (LPMO) that depolymerizes crystalline and amorphous polysaccharides via the oxidation of scissile alpha- or beta-(1-4)-glycosidic bonds, yielding C1 and C4 oxidation products. Catalysis by LPMOs requires the reduction of the active-site copper from Cu(II) to Cu(I) by a reducing agent and H(2)O(2) or O(2) as a cosubstrate. Active on cellulose and on xyloglucan for deconstruction of plant biomass. In Geotrichum candidum (Oospora lactis), this protein is AA9 family lytic polysaccharide monooxygenase A.